The chain runs to 123 residues: Holo-[acyl-carrier-protein] synthase (123 aa).

Residues Asp9 and Glu57 each coordinate Mg(2+).

This sequence belongs to the P-Pant transferase superfamily. AcpS family. Mg(2+) is required as a cofactor.

It is found in the cytoplasm. The enzyme catalyses apo-[ACP] + CoA = holo-[ACP] + adenosine 3',5'-bisphosphate + H(+). Transfers the 4'-phosphopantetheine moiety from coenzyme A to a Ser of acyl-carrier-protein. In Streptomyces avermitilis (strain ATCC 31267 / DSM 46492 / JCM 5070 / NBRC 14893 / NCIMB 12804 / NRRL 8165 / MA-4680), this protein is Holo-[acyl-carrier-protein] synthase.